Reading from the N-terminus, the 183-residue chain is MKKKTTLSEEDQALFRQLMAGTRKIKQDTIVHRPQRKKVSEVPVKRLIQEQVDASHYFSDEFQPLLNADGPVKYVRPGVDHFEAKKLRRGDYSPELFLDLHGLTQLQAKQELGALIAACRREHVFCACVMHGHGKHILKQQTPLWLAQHPHVMAFHQAPKEYGGDAALLVLIEVEEWLPPELP.

Residues 98–173 (LDLHGLTQLQ…GDAALLVLIE (76 aa)) form the Smr domain.

It belongs to the SmrB family. In terms of assembly, associates with collided ribosomes, but not with correctly translating polysomes.

In terms of biological role, acts as a ribosome collision sensor. Detects stalled/collided disomes (pairs of ribosomes where the leading ribosome is stalled and a second ribosome has collided with it) and endonucleolytically cleaves mRNA at the 5' boundary of the stalled ribosome. Stalled/collided disomes form a new interface (primarily via the 30S subunits) that binds SmrB. Cleaved mRNA becomes available for tmRNA ligation, leading to ribosomal subunit dissociation and rescue of stalled ribosomes. This chain is Ribosome rescue factor SmrB, found in Escherichia coli O157:H7.